Consider the following 258-residue polypeptide: Acyl-[acyl-carrier-protein]--UDP-N-acetylglucosamine O-acyltransferase (258 aa).

Belongs to the transferase hexapeptide repeat family. LpxA subfamily. Homotrimer.

It is found in the cytoplasm. It catalyses the reaction a (3R)-hydroxyacyl-[ACP] + UDP-N-acetyl-alpha-D-glucosamine = a UDP-3-O-[(3R)-3-hydroxyacyl]-N-acetyl-alpha-D-glucosamine + holo-[ACP]. The protein operates within glycolipid biosynthesis; lipid IV(A) biosynthesis; lipid IV(A) from (3R)-3-hydroxytetradecanoyl-[acyl-carrier-protein] and UDP-N-acetyl-alpha-D-glucosamine: step 1/6. In terms of biological role, involved in the biosynthesis of lipid A, a phosphorylated glycolipid that anchors the lipopolysaccharide to the outer membrane of the cell. This Ectopseudomonas mendocina (strain ymp) (Pseudomonas mendocina) protein is Acyl-[acyl-carrier-protein]--UDP-N-acetylglucosamine O-acyltransferase.